We begin with the raw amino-acid sequence, 30 residues long: uncharacterized protein (30 aa).

This is an uncharacterized protein from Treponema pallidum (strain Nichols).